Reading from the N-terminus, the 335-residue chain is uncharacterized protein (335 aa).

Belongs to the glycosyltransferase group 1 family. Glycosyltransferase 4 subfamily.

This is an uncharacterized protein from Sulfolobus islandicus rod-shaped virus 1 (SIRV-1).